Here is a 392-residue protein sequence, read N- to C-terminus: Phospho-N-acetylmuramoyl-pentapeptide-transferase (392 aa).

10 consecutive transmembrane segments (helical) span residues 29-49 (AVMA…FVIR), 76-96 (TMGG…WFDL), 100-120 (FVWI…ADDW), 137-157 (YLWQ…SISE), 193-213 (ISYP…IVGS), 225-245 (GLAI…AYVT), 262-282 (SGEL…FLWF), 289-309 (VFMG…IAVI), 314-334 (IVLA…MMQV), and 369-389 (QVVV…LSTL).

This sequence belongs to the glycosyltransferase 4 family. MraY subfamily. The cofactor is Mg(2+).

The protein localises to the cell inner membrane. The enzyme catalyses UDP-N-acetyl-alpha-D-muramoyl-L-alanyl-gamma-D-glutamyl-meso-2,6-diaminopimeloyl-D-alanyl-D-alanine + di-trans,octa-cis-undecaprenyl phosphate = di-trans,octa-cis-undecaprenyl diphospho-N-acetyl-alpha-D-muramoyl-L-alanyl-D-glutamyl-meso-2,6-diaminopimeloyl-D-alanyl-D-alanine + UMP. The protein operates within cell wall biogenesis; peptidoglycan biosynthesis. In terms of biological role, catalyzes the initial step of the lipid cycle reactions in the biosynthesis of the cell wall peptidoglycan: transfers peptidoglycan precursor phospho-MurNAc-pentapeptide from UDP-MurNAc-pentapeptide onto the lipid carrier undecaprenyl phosphate, yielding undecaprenyl-pyrophosphoryl-MurNAc-pentapeptide, known as lipid I. The chain is Phospho-N-acetylmuramoyl-pentapeptide-transferase from Polaromonas sp. (strain JS666 / ATCC BAA-500).